The primary structure comprises 203 residues: Holliday junction branch migration complex subunit RuvA (203 aa).

The interval 1–63 (MIVSLRGTVE…EESQTLYGFT (63 aa)) is domain I. The tract at residues 64 to 142 (DDASRRMFVL…GFNDGIPAAA (79 aa)) is domain II. A flexible linker region spans residues 143-150 (QPQLSIAV). Residues 150–203 (VDQAVQEQVLEALVGLGFSEKIALPVLSRVLRDSPELSKSQALRAALSELGTKN) form a domain III region.

It belongs to the RuvA family. In terms of assembly, homotetramer. Forms an RuvA(8)-RuvB(12)-Holliday junction (HJ) complex. HJ DNA is sandwiched between 2 RuvA tetramers; dsDNA enters through RuvA and exits via RuvB. An RuvB hexamer assembles on each DNA strand where it exits the tetramer. Each RuvB hexamer is contacted by two RuvA subunits (via domain III) on 2 adjacent RuvB subunits; this complex drives branch migration. In the full resolvosome a probable DNA-RuvA(4)-RuvB(12)-RuvC(2) complex forms which resolves the HJ.

Its subcellular location is the cytoplasm. In terms of biological role, the RuvA-RuvB-RuvC complex processes Holliday junction (HJ) DNA during genetic recombination and DNA repair, while the RuvA-RuvB complex plays an important role in the rescue of blocked DNA replication forks via replication fork reversal (RFR). RuvA specifically binds to HJ cruciform DNA, conferring on it an open structure. The RuvB hexamer acts as an ATP-dependent pump, pulling dsDNA into and through the RuvAB complex. HJ branch migration allows RuvC to scan DNA until it finds its consensus sequence, where it cleaves and resolves the cruciform DNA. This Corynebacterium diphtheriae (strain ATCC 700971 / NCTC 13129 / Biotype gravis) protein is Holliday junction branch migration complex subunit RuvA.